The primary structure comprises 240 residues: Biosynthetic peptidoglycan transglycosylase (240 aa).

A helical transmembrane segment spans residues 12–31 (ALMWFMVGSVLLVLLLRFVP).

Belongs to the glycosyltransferase 51 family.

The protein localises to the cell inner membrane. The enzyme catalyses [GlcNAc-(1-&gt;4)-Mur2Ac(oyl-L-Ala-gamma-D-Glu-L-Lys-D-Ala-D-Ala)](n)-di-trans,octa-cis-undecaprenyl diphosphate + beta-D-GlcNAc-(1-&gt;4)-Mur2Ac(oyl-L-Ala-gamma-D-Glu-L-Lys-D-Ala-D-Ala)-di-trans,octa-cis-undecaprenyl diphosphate = [GlcNAc-(1-&gt;4)-Mur2Ac(oyl-L-Ala-gamma-D-Glu-L-Lys-D-Ala-D-Ala)](n+1)-di-trans,octa-cis-undecaprenyl diphosphate + di-trans,octa-cis-undecaprenyl diphosphate + H(+). Its pathway is cell wall biogenesis; peptidoglycan biosynthesis. In terms of biological role, peptidoglycan polymerase that catalyzes glycan chain elongation from lipid-linked precursors. In Pseudomonas fluorescens (strain ATCC BAA-477 / NRRL B-23932 / Pf-5), this protein is Biosynthetic peptidoglycan transglycosylase.